Here is a 265-residue protein sequence, read N- to C-terminus: Undecaprenyl-diphosphatase (265 aa).

Transmembrane regions (helical) follow at residues 42 to 62 (ATTF…VLYW), 82 to 102 (GIML…AAHS), 108 to 128 (LFTP…MLLV), 143 to 163 (MSPA…WPGF), 181 to 201 (GLAA…ATGY), 221 to 241 (GFVV…ALVG), and 248 to 264 (FAWY…YFMA).

It belongs to the UppP family.

The protein resides in the cell inner membrane. It catalyses the reaction di-trans,octa-cis-undecaprenyl diphosphate + H2O = di-trans,octa-cis-undecaprenyl phosphate + phosphate + H(+). Its function is as follows. Catalyzes the dephosphorylation of undecaprenyl diphosphate (UPP). Confers resistance to bacitracin. This Nitratidesulfovibrio vulgaris (strain ATCC 29579 / DSM 644 / CCUG 34227 / NCIMB 8303 / VKM B-1760 / Hildenborough) (Desulfovibrio vulgaris) protein is Undecaprenyl-diphosphatase.